The primary structure comprises 356 residues: Histidinol-phosphate aminotransferase (356 aa).

An N6-(pyridoxal phosphate)lysine modification is found at Lys-211.

The protein belongs to the class-II pyridoxal-phosphate-dependent aminotransferase family. Histidinol-phosphate aminotransferase subfamily. As to quaternary structure, homodimer. Pyridoxal 5'-phosphate serves as cofactor.

The catalysed reaction is L-histidinol phosphate + 2-oxoglutarate = 3-(imidazol-4-yl)-2-oxopropyl phosphate + L-glutamate. It participates in amino-acid biosynthesis; L-histidine biosynthesis; L-histidine from 5-phospho-alpha-D-ribose 1-diphosphate: step 7/9. The polypeptide is Histidinol-phosphate aminotransferase (Blochmanniella floridana).